The following is a 557-amino-acid chain: NADH-quinone oxidoreductase subunit C/D (557 aa).

A compositionally biased stretch (acidic residues) spans 1 to 13 (MSLEEQQSDDPAE). The tract at residues 1–20 (MSLEEQQSDDPAELESGVSR) is disordered. The NADH dehydrogenase I subunit C stretch occupies residues 1-174 (MSLEEQQSDD…ATLREHANPL (174 aa)). Residues 184–557 (NTMYINIGPH…LDIVLGEVDR (374 aa)) are NADH dehydrogenase I subunit D. Residue lysine 517 forms a Glycyl lysine isopeptide (Lys-Gly) (interchain with G-Cter in SAMP2) linkage.

This sequence in the N-terminal section; belongs to the complex I 30 kDa subunit family. It in the C-terminal section; belongs to the complex I 49 kDa subunit family. In terms of assembly, NDH-1 is composed of 13 different subunits. Subunits NuoB, CD, E, F, and G constitute the peripheral sector of the complex.

The protein resides in the cell membrane. The catalysed reaction is a quinone + NADH + 5 H(+)(in) = a quinol + NAD(+) + 4 H(+)(out). Functionally, NDH-1 shuttles electrons from NADH, via FMN and iron-sulfur (Fe-S) centers, to quinones in the respiratory chain. Couples the redox reaction to proton translocation (for every two electrons transferred, four hydrogen ions are translocated across the cytoplasmic membrane), and thus conserves the redox energy in a proton gradient. This Haloferax volcanii (strain ATCC 29605 / DSM 3757 / JCM 8879 / NBRC 14742 / NCIMB 2012 / VKM B-1768 / DS2) (Halobacterium volcanii) protein is NADH-quinone oxidoreductase subunit C/D (nuoCD).